A 738-amino-acid chain; its full sequence is MDDVQFSEGVIDNGRFGTRTIRFETGRLARQAQGSVVAYLDGETMLLSSTSVGKQPKEDCDFFPLTVDVEERSYAAGKIPGSYFRREGRPSTEAILACRLIDRPLRPSFNAGLRNEVQVIVTVLSIAPGEFYEALAINAASASTLVSGLPFSGPIGGVRLALIDGQWVAFPRYEDLSGAVFDLTVAGRVFVNESGKEDIAIMMVEAEATESAWDLIHSHGAKKPNEEVIEEGIESAKVFIRTLCDIQRDLASKLSLSHTEPDLYPDYSDSVHSFVEGLVKSDLEKVYRGNHDSGYAPNALSASDEIKQKAYDAFHDAVLSGRFDQDSLSQFPHAYKAVLKDVVRTCVLEGFARMDGRGLSDIRPLDAEVQVVPRVHGSAVFQRGETQVLGVTTLNMLKMEQQIDSLAPIVSKRYIHHYNFPPYSTGEVGRVGSPKRREIGHGFLAERALVPVLPSREDFPYAIRQVSEALGSNGSTSMGSVCASTLSLLNAGVPLRAPVAGIAMGLISGRVDGEMRYVTLTDISGSEDALGDMDFKVAGTSDFITALQLDTKLDGIPAHVLSEALAHARSARLAILDVLTRVIDSPDQMSEYAPRVVRVKIPVQKIGELIGPKGKVINSIQDETGAEISIEDDGTVYIGSSQADSSEKAVAMVNSIVNPVEPCVGSQFLGTVVKNMPFGSFISLVPGKDGLLHISEIRKMVDGRHLESVDEVLSVGQKVLVEVSKIDDRGKLCLVAVK.

Mg(2+) is bound by residues aspartate 528 and aspartate 534. Residues proline 594 to valine 653 enclose the KH domain. The 73-residue stretch at glycine 665–valine 737 folds into the S1 motif domain.

Belongs to the polyribonucleotide nucleotidyltransferase family. It depends on Mg(2+) as a cofactor.

The protein localises to the cytoplasm. The enzyme catalyses RNA(n+1) + phosphate = RNA(n) + a ribonucleoside 5'-diphosphate. Functionally, involved in mRNA degradation. Catalyzes the phosphorolysis of single-stranded polyribonucleotides processively in the 3'- to 5'-direction. The polypeptide is Polyribonucleotide nucleotidyltransferase (Tropheryma whipplei (strain Twist) (Whipple's bacillus)).